The following is a 247-amino-acid chain: Probable transcriptional regulatory protein lpl1249 (247 aa).

This sequence belongs to the TACO1 family.

The protein resides in the cytoplasm. The polypeptide is Probable transcriptional regulatory protein lpl1249 (Legionella pneumophila (strain Lens)).